Consider the following 545-residue polypeptide: CTP synthase (545 aa).

Residues 1–266 are amidoligase domain; it reads MATNYIFVTG…DDFVCERFRL (266 aa). A CTP-binding site is contributed by serine 14. Residue serine 14 participates in UTP binding. ATP is bound by residues 15–20 and aspartate 72; that span reads SLGKGI. Aspartate 72 and glutamate 140 together coordinate Mg(2+). Residues 147 to 149, 187 to 192, and lysine 223 each bind CTP; these read DIE and KTKPTQ. UTP-binding positions include 187–192 and lysine 223; that span reads KTKPTQ. 239-241 contributes to the ATP binding site; the sequence is KDV. In terms of domain architecture, Glutamine amidotransferase type-1 spans 291–542; that stretch reads TIGMVGKYTE…VKAAYENHKK (252 aa). An L-glutamine-binding site is contributed by glycine 352. Residue cysteine 379 is the Nucleophile; for glutamine hydrolysis of the active site. L-glutamine-binding positions include 380–383, glutamate 403, and arginine 470; that span reads LGMQ. Catalysis depends on residues histidine 515 and glutamate 517.

Belongs to the CTP synthase family. In terms of assembly, homotetramer.

It catalyses the reaction UTP + L-glutamine + ATP + H2O = CTP + L-glutamate + ADP + phosphate + 2 H(+). The enzyme catalyses L-glutamine + H2O = L-glutamate + NH4(+). It carries out the reaction UTP + NH4(+) + ATP = CTP + ADP + phosphate + 2 H(+). Its pathway is pyrimidine metabolism; CTP biosynthesis via de novo pathway; CTP from UDP: step 2/2. Allosterically activated by GTP, when glutamine is the substrate; GTP has no effect on the reaction when ammonia is the substrate. The allosteric effector GTP functions by stabilizing the protein conformation that binds the tetrahedral intermediate(s) formed during glutamine hydrolysis. Inhibited by the product CTP, via allosteric rather than competitive inhibition. Functionally, catalyzes the ATP-dependent amination of UTP to CTP with either L-glutamine or ammonia as the source of nitrogen. Regulates intracellular CTP levels through interactions with the four ribonucleotide triphosphates. The polypeptide is CTP synthase (Haemophilus influenzae (strain ATCC 51907 / DSM 11121 / KW20 / Rd)).